The chain runs to 299 residues: Apolipoprotein E (299 aa).

A signal peptide spans 1 to 18 (MKVLCTVLVVTLLAGCRA). 7 consecutive repeat copies span residues 74–95 (VLME…QELV), 96–117 (PMAE…ARLG), 118–139 (ADME…AMLG), 140–161 (QSAD…KRML), 162–183 (RDAE…EGAE), 184–205 (RGVS…VRAA), and 224–245 (GRLE…EQME). The 8 X 22 AA approximate tandem repeats stretch occupies residues 74–245 (VLMEDTMKAV…RLEEMREQME (172 aa)). At M137 the chain carries Methionine sulfoxide. Position 141 is a phosphoserine (S141). The segment at 152–162 (HLRKLRKRMLR) is LDL and other lipoprotein receptors binding. 156-159 (LRKR) serves as a coordination point for heparin. The tract at residues 204–273 (AALTGQPLQE…GWFEPMVEDM (70 aa)) is lipid-binding and lipoprotein association. Heparin is bound at residue 219 to 226 (GKQLRGRL). The segment at 261-273 (RLKGWFEPMVEDM) is specificity for association with VLDL.

Belongs to the apolipoprotein A1/A4/E family. Homotetramer. May interact with ABCA1; functionally associated with ABCA1 in the biogenesis of HDLs. May interact with APP/A4 amyloid-beta peptide; the interaction is extremely stable in vitro but its physiological significance is unclear. May interact with MAPT. May interact with MAP2. In the cerebrospinal fluid, interacts with secreted SORL1. Interacts with PMEL; this allows the loading of PMEL luminal fragment on ILVs to induce fibril nucleation. Post-translationally, APOE exists as multiple glycosylated and sialylated glycoforms within cells and in plasma. The extent of glycosylation and sialylation are tissue and context specific. Glycated in plasma VLDL. In terms of processing, phosphorylated by FAM20C in the extracellular medium.

Its subcellular location is the secreted. It is found in the extracellular space. The protein resides in the extracellular matrix. It localises to the extracellular vesicle. The protein localises to the endosome. Its subcellular location is the multivesicular body. Functionally, APOE is an apolipoprotein, a protein associating with lipid particles, that mainly functions in lipoprotein-mediated lipid transport between organs via the plasma and interstitial fluids. APOE is a core component of plasma lipoproteins and is involved in their production, conversion and clearance. Apolipoproteins are amphipathic molecules that interact both with lipids of the lipoprotein particle core and the aqueous environment of the plasma. As such, APOE associates with chylomicrons, chylomicron remnants, very low density lipoproteins (VLDL) and intermediate density lipoproteins (IDL) but shows a preferential binding to high-density lipoproteins (HDL). It also binds a wide range of cellular receptors including the LDL receptor/LDLR, the LDL receptor-related proteins LRP1, LRP2 and LRP8 and the very low-density lipoprotein receptor/VLDLR that mediate the cellular uptake of the APOE-containing lipoprotein particles. Finally, APOE also has a heparin-binding activity and binds heparan-sulfate proteoglycans on the surface of cells, a property that supports the capture and the receptor-mediated uptake of APOE-containing lipoproteins by cells. A main function of APOE is to mediate lipoprotein clearance through the uptake of chylomicrons, VLDLs, and HDLs by hepatocytes. APOE is also involved in the biosynthesis by the liver of VLDLs as well as their uptake by peripheral tissues ensuring the delivery of triglycerides and energy storage in muscle, heart and adipose tissues. By participating in the lipoprotein-mediated distribution of lipids among tissues, APOE plays a critical role in plasma and tissues lipid homeostasis. APOE is also involved in two steps of reverse cholesterol transport, the HDLs-mediated transport of cholesterol from peripheral tissues to the liver, and thereby plays an important role in cholesterol homeostasis. First, it is functionally associated with ABCA1 in the biogenesis of HDLs in tissues. Second, it is enriched in circulating HDLs and mediates their uptake by hepatocytes. APOE also plays an important role in lipid transport in the central nervous system, regulating neuron survival and sprouting. The polypeptide is Apolipoprotein E (APOE) (Octodon degus (Degu)).